Here is a 322-residue protein sequence, read N- to C-terminus: Probable manganese-dependent inorganic pyrophosphatase (322 aa).

Mn(2+) is bound by residues H10, D14, D16, D86, H108, and D160.

The protein belongs to the PPase class C family. Mn(2+) serves as cofactor.

It localises to the cytoplasm. The catalysed reaction is diphosphate + H2O = 2 phosphate + H(+). In Archaeoglobus fulgidus (strain ATCC 49558 / DSM 4304 / JCM 9628 / NBRC 100126 / VC-16), this protein is Probable manganese-dependent inorganic pyrophosphatase (ppaC).